Here is a 238-residue protein sequence, read N- to C-terminus: Ribitol-5-phosphate cytidylyltransferase 1 (238 aa).

CTP is bound by residues 7-10 (LAGG) and 81-87 (GSDRNDT).

It belongs to the IspD/TarI cytidylyltransferase family. TarI subfamily.

It catalyses the reaction D-ribitol 5-phosphate + CTP + H(+) = CDP-L-ribitol + diphosphate. It participates in cell wall biogenesis; poly(ribitol phosphate) teichoic acid biosynthesis. Functionally, catalyzes the transfer of the cytidylyl group of CTP to D-ribitol 5-phosphate. This chain is Ribitol-5-phosphate cytidylyltransferase 1, found in Staphylococcus aureus (strain USA300).